The primary structure comprises 289 residues: Esterase GA18864 (289 aa).

Positions 1-19 (MTNNDAAVEAPSSSRASSS) are enriched in low complexity. The segment at 1 to 24 (MTNNDAAVEAPSSSRASSSKQQPK) is disordered. Active-site charge relay system residues include serine 133, aspartate 191, and histidine 218. Residues 253–289 (VSFIESGAEDNDDDGDANDAEVAAATAAAGSDLDDSD) are disordered. The span at 259–271 (GAEDNDDDGDAND) shows a compositional bias: acidic residues. The segment covering 272–283 (AEVAAATAAAGS) has biased composition (low complexity).

This sequence belongs to the LovG family.

The chain is Esterase GA18864 from Drosophila pseudoobscura pseudoobscura (Fruit fly).